The following is a 447-amino-acid chain: Phosphoglucosamine mutase (447 aa).

Serine 100 acts as the Phosphoserine intermediate in catalysis. Mg(2+) is bound by residues serine 100, aspartate 239, aspartate 241, and aspartate 243. The residue at position 100 (serine 100) is a Phosphoserine.

This sequence belongs to the phosphohexose mutase family. Mg(2+) serves as cofactor. In terms of processing, activated by phosphorylation.

The catalysed reaction is alpha-D-glucosamine 1-phosphate = D-glucosamine 6-phosphate. In terms of biological role, catalyzes the conversion of glucosamine-6-phosphate to glucosamine-1-phosphate. The sequence is that of Phosphoglucosamine mutase from Caldanaerobacter subterraneus subsp. tengcongensis (strain DSM 15242 / JCM 11007 / NBRC 100824 / MB4) (Thermoanaerobacter tengcongensis).